Reading from the N-terminus, the 66-residue chain is Large ribosomal subunit protein bL33c (66 aa).

It belongs to the bacterial ribosomal protein bL33 family.

It localises to the plastid. The protein localises to the chloroplast. This chain is Large ribosomal subunit protein bL33c, found in Lobularia maritima (Sweet alyssum).